We begin with the raw amino-acid sequence, 85 residues long: Large ribosomal subunit protein bL27 (85 aa).

The segment at 1–22 (MAHKKAGGSTRNGRDSESKRLG) is disordered.

Belongs to the bacterial ribosomal protein bL27 family.

The chain is Large ribosomal subunit protein bL27 from Vibrio parahaemolyticus serotype O3:K6 (strain RIMD 2210633).